Consider the following 548-residue polypeptide: Membrane protein insertase YidC (548 aa).

Residues 6 to 26 (NLLVIALLFVSFMIWQAWEQD) form a helical membrane-spanning segment. Residues 28-56 (NPQPQTQQTTQTTTTAAGSAADQGVPASG) form a disordered region. The segment covering 29–42 (PQPQTQQTTQTTTT) has biased composition (low complexity). The next 4 helical transmembrane spans lie at 350–370 (FVGN…GIMY), 424–444 (FPLI…MGSI), 458–478 (LSAQ…MFFI), and 499–519 (PVIF…YYIV).

It belongs to the OXA1/ALB3/YidC family. Type 1 subfamily. As to quaternary structure, interacts with the Sec translocase complex via SecD. Specifically interacts with transmembrane segments of nascent integral membrane proteins during membrane integration.

It is found in the cell inner membrane. Functionally, required for the insertion and/or proper folding and/or complex formation of integral membrane proteins into the membrane. Involved in integration of membrane proteins that insert both dependently and independently of the Sec translocase complex, as well as at least some lipoproteins. Aids folding of multispanning membrane proteins. The protein is Membrane protein insertase YidC of Salmonella choleraesuis (strain SC-B67).